The sequence spans 246 residues: Biosynthetic peptidoglycan transglycosylase (246 aa).

Residues 20–42 (SLRWVLAAPLLFAAASVLQVLAL) form a helical membrane-spanning segment.

Belongs to the glycosyltransferase 51 family.

It localises to the cell inner membrane. It catalyses the reaction [GlcNAc-(1-&gt;4)-Mur2Ac(oyl-L-Ala-gamma-D-Glu-L-Lys-D-Ala-D-Ala)](n)-di-trans,octa-cis-undecaprenyl diphosphate + beta-D-GlcNAc-(1-&gt;4)-Mur2Ac(oyl-L-Ala-gamma-D-Glu-L-Lys-D-Ala-D-Ala)-di-trans,octa-cis-undecaprenyl diphosphate = [GlcNAc-(1-&gt;4)-Mur2Ac(oyl-L-Ala-gamma-D-Glu-L-Lys-D-Ala-D-Ala)](n+1)-di-trans,octa-cis-undecaprenyl diphosphate + di-trans,octa-cis-undecaprenyl diphosphate + H(+). The protein operates within cell wall biogenesis; peptidoglycan biosynthesis. Peptidoglycan polymerase that catalyzes glycan chain elongation from lipid-linked precursors. The chain is Biosynthetic peptidoglycan transglycosylase from Xanthomonas campestris pv. campestris (strain 8004).